Consider the following 69-residue polypeptide: uncharacterized protein (69 aa).

This is an uncharacterized protein from Escherichia coli O6:H1 (strain CFT073 / ATCC 700928 / UPEC).